The primary structure comprises 161 residues: C-type natriuretic peptide (161 aa).

A signal peptide spans 1-22 (MFASRLAALGLLLLALVLDGKP). The tract at residues 19-135 (DGKPAPPPQP…GGGGSRRLKG (117 aa)) is disordered. A propeptide spanning residues 23–139 (APPPQPLRKA…SRRLKGLPKK (117 aa)) is cleaved from the precursor. 2 stretches are compositionally biased toward low complexity: residues 29 to 60 (LRKA…SSGP) and 76 to 93 (AAPT…AASR). Basic and acidic residues predominate over residues 94–104 (LLRDLRPDGKQ). The segment covering 120 to 130 (GGGGGGGGGGS) has biased composition (gly residues). An intrachain disulfide couples cysteine 145 to cysteine 161.

It belongs to the natriuretic peptide family. Expressed by the venom gland.

The protein resides in the secreted. Its function is as follows. Snake venom natriuretic peptide that has a vasorelaxant activity in rat aortic strips and a diuretic potency in anesthetized rats. May act by activating natriuretic receptors (NPR1 and/or NPR2). The sequence is that of C-type natriuretic peptide from Rhabdophis tigrinus tigrinus (Tiger keelback snake).